We begin with the raw amino-acid sequence, 179 residues long: ATP synthase subunit delta 2 (179 aa).

It belongs to the ATPase delta chain family. F-type ATPases have 2 components, F(1) - the catalytic core - and F(0) - the membrane proton channel. F(1) has five subunits: alpha(3), beta(3), gamma(1), delta(1), epsilon(1). F(0) has three main subunits: a(1), b(2) and c(10-14). The alpha and beta chains form an alternating ring which encloses part of the gamma chain. F(1) is attached to F(0) by a central stalk formed by the gamma and epsilon chains, while a peripheral stalk is formed by the delta and b chains.

The protein localises to the cell inner membrane. Its function is as follows. F(1)F(0) ATP synthase produces ATP from ADP in the presence of a proton or sodium gradient. F-type ATPases consist of two structural domains, F(1) containing the extramembraneous catalytic core and F(0) containing the membrane proton channel, linked together by a central stalk and a peripheral stalk. During catalysis, ATP synthesis in the catalytic domain of F(1) is coupled via a rotary mechanism of the central stalk subunits to proton translocation. This protein is part of the stalk that links CF(0) to CF(1). It either transmits conformational changes from CF(0) to CF(1) or is implicated in proton conduction. In Syntrophotalea carbinolica (strain DSM 2380 / NBRC 103641 / GraBd1) (Pelobacter carbinolicus), this protein is ATP synthase subunit delta 2.